A 145-amino-acid polypeptide reads, in one-letter code: Large-conductance mechanosensitive channel (145 aa).

The next 3 membrane-spanning stretches (helical) occupy residues 10 to 30 (FALK…GAFA), 41 to 61 (IMPI…MFLI), and 87 to 107 (GNFI…FMMV).

It belongs to the MscL family. As to quaternary structure, homopentamer.

It localises to the cell inner membrane. In terms of biological role, channel that opens in response to stretch forces in the membrane lipid bilayer. May participate in the regulation of osmotic pressure changes within the cell. The sequence is that of Large-conductance mechanosensitive channel from Psychrobacter arcticus (strain DSM 17307 / VKM B-2377 / 273-4).